Reading from the N-terminus, the 808-residue chain is Envelope glycoprotein H (808 aa).

The signal sequence occupies residues 1–17; it reads MKFYCLIRFMIIANLYS. The Virion surface segment spans residues 18–761; the sequence is SYQISLPGTY…ESERVTIISA (744 aa). Residues asparagine 44, asparagine 60, asparagine 114, asparagine 240, asparagine 272, asparagine 431, asparagine 461, asparagine 719, and asparagine 742 are each glycosylated (N-linked (GlcNAc...) asparagine; by host). Residues 205–266 form an interaction with gL region; that stretch reads AGMEILMKMG…GTGRPHWIYL (62 aa). Residues 762-782 traverse the membrane as a helical segment; that stretch reads TYIATAVAGSIIALTVIVITV. Residues 783–808 lie on the Intravirion side of the membrane; that stretch reads RMIIINMRYNYQGYNKVIDVDDDIRN.

Belongs to the herpesviridae glycoprotein H family. As to quaternary structure, interacts with glycoprotein L (gL); this interaction is necessary for the correct processing and cell surface expression of gH. The heterodimer gH/gL seems to interact with gB trimers during fusion. Post-translationally, N-glycosylated, O-glycosylated, and sialylated.

The protein resides in the virion membrane. Its subcellular location is the host cell membrane. The protein localises to the host endosome membrane. In terms of biological role, the heterodimer glycoprotein H-glycoprotein L is required for the fusion of viral and plasma membranes leading to virus entry into the host cell. Following initial binding to host receptor, membrane fusion is mediated by the fusion machinery composed of gB and the heterodimer gH/gL. May also be involved in the fusion between the virion envelope and the outer nuclear membrane during virion morphogenesis. This chain is Envelope glycoprotein H, found in Gallus gallus (Chicken).